A 249-amino-acid polypeptide reads, in one-letter code: Eukaryotic translation initiation factor 3 subunit J-A (249 aa).

Over residues 1-15 (MADADSWDADSFEPE) the composition is skewed to acidic residues. A disordered region spans residues 1–104 (MADADSWDAD…DTPLTPEDEL (104 aa)). The span at 16–27 (EPIKKAAVHDKW) shows a compositional bias: basic and acidic residues. The segment covering 28–52 (EGEDEDDDVKDNWDDDEEEEKEEEE) has biased composition (acidic residues). Positions 34–96 (DDVKDNWDDD…QQLEETKRDT (63 aa)) form a coiled coil. The segment covering 53-96 (EKKTEAKPTEKKKLSEKIKEKENLQRKKQEELRKQQLEETKRDT) has biased composition (basic and acidic residues).

This sequence belongs to the eIF-3 subunit J family. Component of the eukaryotic translation initiation factor 3 (eIF-3) complex, which is composed of 13 subunits: eif3a, eif3b, eif3c, eif3d, eif3e, eif3f, eif3g, eif3h, eif3i, eif3j, eif3k, eif3l and eif3m.

The protein localises to the cytoplasm. Functionally, component of the eukaryotic translation initiation factor 3 (eIF-3) complex, which is involved in protein synthesis of a specialized repertoire of mRNAs and, together with other initiation factors, stimulates binding of mRNA and methionyl-tRNAi to the 40S ribosome. The eIF-3 complex specifically targets and initiates translation of a subset of mRNAs involved in cell proliferation. The chain is Eukaryotic translation initiation factor 3 subunit J-A (eif3ja) from Danio rerio (Zebrafish).